The chain runs to 322 residues: Protein-L-isoaspartate O-methyltransferase (322 aa).

A disordered region spans residues 1-101 (MSGERAKRFP…AKQGDRSAAP (101 aa)). A compositionally biased stretch (basic and acidic residues) spans 14 to 29 (EDLKREPRKPEGRVAE). Low complexity-rich tracts occupy residues 33–51 (AGDA…PAAA) and 67–91 (AANP…PQGG). The active site involves Ser170.

The protein belongs to the methyltransferase superfamily. L-isoaspartyl/D-aspartyl protein methyltransferase family.

The protein resides in the cytoplasm. The enzyme catalyses [protein]-L-isoaspartate + S-adenosyl-L-methionine = [protein]-L-isoaspartate alpha-methyl ester + S-adenosyl-L-homocysteine. Catalyzes the methyl esterification of L-isoaspartyl residues in peptides and proteins that result from spontaneous decomposition of normal L-aspartyl and L-asparaginyl residues. It plays a role in the repair and/or degradation of damaged proteins. The sequence is that of Protein-L-isoaspartate O-methyltransferase from Burkholderia pseudomallei (strain 668).